We begin with the raw amino-acid sequence, 90 residues long: DNA-directed RNA polymerase subunit omega (90 aa).

Positions 70–90 (QEQQEQEAAELAAVSSIMHNR) are disordered.

It belongs to the RNA polymerase subunit omega family. In terms of assembly, the RNAP catalytic core consists of 2 alpha, 1 beta, 1 beta' and 1 omega subunit. When a sigma factor is associated with the core the holoenzyme is formed, which can initiate transcription.

The catalysed reaction is RNA(n) + a ribonucleoside 5'-triphosphate = RNA(n+1) + diphosphate. In terms of biological role, promotes RNA polymerase assembly. Latches the N- and C-terminal regions of the beta' subunit thereby facilitating its interaction with the beta and alpha subunits. This is DNA-directed RNA polymerase subunit omega from Vibrio cholerae serotype O1 (strain ATCC 39541 / Classical Ogawa 395 / O395).